Consider the following 170-residue polypeptide: Transcriptional repressor NrdR (170 aa).

The segment at 3-34 (CPFCRHPDSRVVDSRTTDDGTSIRRRRQCPDC) is a zinc-finger region. An ATP-cone domain is found at 46 to 136 (LMVVKRSGVT…VYRAFDSLED (91 aa)). Positions 148–170 (RPSAEDRGSGETLEVPAPAIAAD) are disordered.

It belongs to the NrdR family. Zn(2+) is required as a cofactor.

Negatively regulates transcription of bacterial ribonucleotide reductase nrd genes and operons by binding to NrdR-boxes. The protein is Transcriptional repressor NrdR of Streptomyces griseus subsp. griseus (strain JCM 4626 / CBS 651.72 / NBRC 13350 / KCC S-0626 / ISP 5235).